A 100-amino-acid polypeptide reads, in one-letter code: Integration host factor subunit alpha (100 aa).

The interval 53–72 (FQLRDKPQRPGRNPKTGEEV) is disordered.

Belongs to the bacterial histone-like protein family. As to quaternary structure, heterodimer of an alpha and a beta chain.

Its function is as follows. This protein is one of the two subunits of integration host factor, a specific DNA-binding protein that functions in genetic recombination as well as in transcriptional and translational control. In Neisseria gonorrhoeae (strain ATCC 700825 / FA 1090), this protein is Integration host factor subunit alpha.